We begin with the raw amino-acid sequence, 558 residues long: Glypican-1 (558 aa).

The first 23 residues, 1 to 23 (MELRARGWWLLCAAAALVACARG), serve as a signal peptide directing secretion. Intrachain disulfides connect cysteine 32-cysteine 68, cysteine 62-cysteine 256, cysteine 69-cysteine 259, cysteine 191-cysteine 343, cysteine 246-cysteine 279, cysteine 268-cysteine 415, and cysteine 272-cysteine 401. Residues asparagine 79 and asparagine 116 are each glycosylated (N-linked (GlcNAc...) asparagine). The interval 341 to 374 (QGCGNPKVNPQGPGPEEKRRRGKLAPRERPPSGT) is disordered. A compositionally biased stretch (basic and acidic residues) spans 355 to 370 (PEEKRRRGKLAPRERP). Residues serine 486, serine 488, and serine 490 are each glycosylated (O-linked (Xyl...) (heparan sulfate) serine). A disordered region spans residues 505-534 (RKSSSSRTPLTHALPGLSEQEGQKTSAASC). Residue serine 530 is the site of GPI-anchor amidated serine attachment. Positions 531 to 558 (AASCPQPPTFLLPLLLFLALTVARPRWR) are cleaved as a propeptide — removed in mature form.

Belongs to the glypican family. In terms of processing, S-nitrosylated in a Cu(2+)-dependent manner. Nitric acid (NO) is released from the nitrosylated cysteines by ascorbate or by some other reducing agent, in a Cu(2+) or Zn(2+) dependent manner. This free nitric oxide is then capable of cleaving the heparan sulfate side chains. N- and O-glycosylated. N-glycosylation is mainly of the complex type containing sialic acid. O-glycosylated with heparan sulfate. The heparan sulfate chains can be cleaved either by the action of heparanase or, degraded by a deaminative process that uses nitric oxide (NO) released from the S-nitrosylated cysteines. This process is triggered by ascorbate, or by some other reducing agent, in a Cu(2+)- or Zn(2+) dependent manner. Cu(2+) ions are provided by ceruloproteins such as APP, PRNP or CP which associate with GCP1 in intracellular compartments or lipid rafts. Post-translationally, this cell-associated glypican is further processed to give rise to a medium-released species.

The protein localises to the cell membrane. Its subcellular location is the endosome. The protein resides in the secreted. It is found in the extracellular space. Cell surface proteoglycan that bears heparan sulfate. Binds, via the heparan sulfate side chains, alpha-4 (V) collagen and participates in Schwann cell myelination. May act as a catalyst in increasing the rate of conversion of prion protein PRPN(C) to PRNP(Sc) via associating (via the heparan sulfate side chains) with both forms of PRPN, targeting them to lipid rafts and facilitating their interaction. Required for proper skeletal muscle differentiation by sequestering FGF2 in lipid rafts preventing its binding to receptors (FGFRs) and inhibiting the FGF-mediated signaling. In Homo sapiens (Human), this protein is Glypican-1 (GPC1).